The following is a 290-amino-acid chain: Putative neuropeptide Y receptor type 6 (290 aa).

The Extracellular portion of the chain corresponds to Met-1–Cys-39. A glycan (N-linked (GlcNAc...) asparagine) is linked at Asn-11. A helical membrane pass occupies residues Ile-40–Ile-60. Residues Phe-61–Thr-83 lie on the Cytoplasmic side of the membrane. A helical membrane pass occupies residues Leu-84 to Phe-104. At Gly-105–Leu-111 the chain is on the extracellular side. Cys-109 and Cys-196 are oxidised to a cystine. A helical transmembrane segment spans residues Thr-112 to Val-132. Topologically, residues Glu-133–His-150 are cytoplasmic. The chain crosses the membrane as a helical span at residues Ala-151–Leu-171. Topologically, residues Ser-172–Arg-206 are extracellular. A helical membrane pass occupies residues Leu-207–Ile-227. The Cytoplasmic segment spans residues Cys-228–Arg-258. Residues Ile-259–Ser-279 traverse the membrane as a helical segment. Topologically, residues Ser-280–Cys-290 are extracellular.

Belongs to the G-protein coupled receptor 1 family. In terms of tissue distribution, expressed in heart, skeletal muscle, gastrointestinal tissues, spleen, brain and adrenal glands.

It localises to the membrane. Functionally, when expressed, is unable to bind pancreatic polypeptide (PP), neuropeptide Y (NPY), or peptide YY (PYY), suggesting that either it is functionally inactive or that it may have acquired a pancreatic polypeptide-independent function. The polypeptide is Putative neuropeptide Y receptor type 6 (NPY6R) (Homo sapiens (Human)).